The following is a 199-amino-acid chain: Large ribosomal subunit protein bL25 (199 aa).

The segment at 1 to 21 is disordered; it reads MNIEKTLSVQKREGYGKGPSG.

This sequence belongs to the bacterial ribosomal protein bL25 family. CTC subfamily. In terms of assembly, part of the 50S ribosomal subunit; part of the 5S rRNA/L5/L18/L25 subcomplex. Contacts the 5S rRNA. Binds to the 5S rRNA independently of L5 and L18.

In terms of biological role, this is one of the proteins that binds to the 5S RNA in the ribosome where it forms part of the central protuberance. The chain is Large ribosomal subunit protein bL25 from Desulfovibrio desulfuricans (strain ATCC 27774 / DSM 6949 / MB).